A 515-amino-acid chain; its full sequence is Fatty acyl-CoA reductase 1 (515 aa).

Over 1–465 (MLSIPEFYQG…ARKHLNKLRN (465 aa)) the chain is Cytoplasmic. Residues 466-484 (IRYGFNTILVVLIWRVFIA) traverse the membrane as a helical segment. The Peroxisomal segment spans residues 485-515 (RSQMARNIWYFVVSMCFKFLSYFRASSTMRY).

This sequence belongs to the fatty acyl-CoA reductase family.

The protein localises to the peroxisome membrane. The catalysed reaction is a long-chain fatty acyl-CoA + 2 NADPH + 2 H(+) = a long-chain primary fatty alcohol + 2 NADP(+) + CoA. It carries out the reaction hexadecanoyl-CoA + 2 NADPH + 2 H(+) = hexadecan-1-ol + 2 NADP(+) + CoA. It catalyses the reaction octadecanoyl-CoA + 2 NADPH + 2 H(+) = octadecan-1-ol + 2 NADP(+) + CoA. The enzyme catalyses (9Z)-octadecenoyl-CoA + 2 NADPH + 2 H(+) = (9Z)-octadecen-1-ol + 2 NADP(+) + CoA. The catalysed reaction is (9Z,12Z)-octadecadienoyl-CoA + 2 NADPH + 2 H(+) = (9Z,12Z)-octadecadien-1-ol + 2 NADP(+) + CoA. It carries out the reaction eicosanoyl-CoA + 2 NADPH + 2 H(+) = eicosan-1-ol + 2 NADP(+) + CoA. It catalyses the reaction 16-methylheptadecanoyl-CoA + 2 NADPH + 2 H(+) = 16-methylheptadecan-1-ol + 2 NADP(+) + CoA. The enzyme catalyses 18-methylnonadecanoyl-CoA + 2 NADPH + 2 H(+) = 18-methylnonadecan-1-ol + 2 NADP(+) + CoA. In terms of biological role, catalyzes the reduction of saturated and unsaturated C16 or C18 fatty acyl-CoA to fatty alcohols. It plays an essential role in the production of ether lipids/plasmalogens which synthesis requires fatty alcohols. In parallel, it is also required for wax monoesters production since fatty alcohols also constitute a substrate for their synthesis. The protein is Fatty acyl-CoA reductase 1 (far1) of Xenopus laevis (African clawed frog).